The chain runs to 219 residues: Thiamine-phosphate synthase (219 aa).

Residues 44–48 (QFREK) and Asn-79 contribute to the 4-amino-2-methyl-5-(diphosphooxymethyl)pyrimidine site. Asp-80 and Asp-99 together coordinate Mg(2+). A 4-amino-2-methyl-5-(diphosphooxymethyl)pyrimidine-binding site is contributed by Ser-117. 143-145 (TST) is a binding site for 2-[(2R,5Z)-2-carboxy-4-methylthiazol-5(2H)-ylidene]ethyl phosphate. Position 146 (Lys-146) interacts with 4-amino-2-methyl-5-(diphosphooxymethyl)pyrimidine. Residues Gly-175 and 195 to 196 (IS) contribute to the 2-[(2R,5Z)-2-carboxy-4-methylthiazol-5(2H)-ylidene]ethyl phosphate site.

The protein belongs to the thiamine-phosphate synthase family. The cofactor is Mg(2+).

It carries out the reaction 2-[(2R,5Z)-2-carboxy-4-methylthiazol-5(2H)-ylidene]ethyl phosphate + 4-amino-2-methyl-5-(diphosphooxymethyl)pyrimidine + 2 H(+) = thiamine phosphate + CO2 + diphosphate. The catalysed reaction is 2-(2-carboxy-4-methylthiazol-5-yl)ethyl phosphate + 4-amino-2-methyl-5-(diphosphooxymethyl)pyrimidine + 2 H(+) = thiamine phosphate + CO2 + diphosphate. It catalyses the reaction 4-methyl-5-(2-phosphooxyethyl)-thiazole + 4-amino-2-methyl-5-(diphosphooxymethyl)pyrimidine + H(+) = thiamine phosphate + diphosphate. Its pathway is cofactor biosynthesis; thiamine diphosphate biosynthesis; thiamine phosphate from 4-amino-2-methyl-5-diphosphomethylpyrimidine and 4-methyl-5-(2-phosphoethyl)-thiazole: step 1/1. Condenses 4-methyl-5-(beta-hydroxyethyl)thiazole monophosphate (THZ-P) and 2-methyl-4-amino-5-hydroxymethyl pyrimidine pyrophosphate (HMP-PP) to form thiamine monophosphate (TMP). This is Thiamine-phosphate synthase from Bacillus cereus (strain B4264).